The chain runs to 692 residues: UvrABC system protein B (692 aa).

One can recognise a Helicase ATP-binding domain in the interval 32–187 (ENIENGEKAQ…LLNDLVGIQF (156 aa)). Residue 45–52 (GATGTGKT) coordinates ATP. The short motif at 98-121 (YYDYYQPEAYVPSSDTYIEKDSSV) is the Beta-hairpin element. The Helicase C-terminal domain occupies 436–631 (QIDDLVGEIH…TIKKEIRDLI (196 aa)). The region spanning 656–691 (KALVKKLEKEMQQAAAALDFEGAAQLRDMVLELRAM) is the UVR domain.

The protein belongs to the UvrB family. In terms of assembly, forms a heterotetramer with UvrA during the search for lesions. Interacts with UvrC in an incision complex.

The protein resides in the cytoplasm. Functionally, the UvrABC repair system catalyzes the recognition and processing of DNA lesions. A damage recognition complex composed of 2 UvrA and 2 UvrB subunits scans DNA for abnormalities. Upon binding of the UvrA(2)B(2) complex to a putative damaged site, the DNA wraps around one UvrB monomer. DNA wrap is dependent on ATP binding by UvrB and probably causes local melting of the DNA helix, facilitating insertion of UvrB beta-hairpin between the DNA strands. Then UvrB probes one DNA strand for the presence of a lesion. If a lesion is found the UvrA subunits dissociate and the UvrB-DNA preincision complex is formed. This complex is subsequently bound by UvrC and the second UvrB is released. If no lesion is found, the DNA wraps around the other UvrB subunit that will check the other stand for damage. In Lactococcus lactis subsp. cremoris (strain MG1363), this protein is UvrABC system protein B.